The sequence spans 182 residues: Epoxyqueuosine reductase QueH (182 aa).

[4Fe-4S] cluster is bound by residues cysteine 10, cysteine 11, cysteine 85, and cysteine 88. Cysteine 165 and cysteine 167 form a disulfide bridge.

It belongs to the QueH family.

The catalysed reaction is epoxyqueuosine(34) in tRNA + AH2 = queuosine(34) in tRNA + A + H2O. It functions in the pathway tRNA modification; tRNA-queuosine biosynthesis. Functionally, catalyzes the conversion of epoxyqueuosine (oQ) to queuosine (Q), which is a hypermodified base found in the wobble positions of tRNA(Asp), tRNA(Asn), tRNA(His) and tRNA(Tyr). The sequence is that of Epoxyqueuosine reductase QueH from Dehalococcoides mccartyi (strain ATCC BAA-2266 / KCTC 15142 / 195) (Dehalococcoides ethenogenes (strain 195)).